A 123-amino-acid chain; its full sequence is Seminal vesicle secretory protein 5 (123 aa).

Positions M1 to S21 are cleaved as a signal peptide. A disordered region spans residues G50–K123. A compositionally biased stretch (low complexity) spans S64 to S75. Over residues T77 to S87 the composition is skewed to basic and acidic residues.

Belongs to the SVP2/SVP5/SVP6 family. Testis.

Its subcellular location is the secreted. It is found in the extracellular space. The sequence is that of Seminal vesicle secretory protein 5 (Svs5) from Rattus norvegicus (Rat).